Consider the following 128-residue polypeptide: Flagellar assembly factor FliW 1 (128 aa).

Belongs to the FliW family. In terms of assembly, interacts with translational regulator CsrA and flagellin(s).

It localises to the cytoplasm. Acts as an anti-CsrA protein, binds CsrA and prevents it from repressing translation of its target genes, one of which is flagellin. Binds to flagellin and participates in the assembly of the flagellum. The polypeptide is Flagellar assembly factor FliW 1 (Wolinella succinogenes (strain ATCC 29543 / DSM 1740 / CCUG 13145 / JCM 31913 / LMG 7466 / NCTC 11488 / FDC 602W) (Vibrio succinogenes)).